A 174-amino-acid chain; its full sequence is Ribosome maturation factor RimM (174 aa).

Residues 99 to 172 form the PRC barrel domain; that stretch reads ADEFFYHDVI…RLVIRPIAGL (74 aa).

Belongs to the RimM family. As to quaternary structure, binds ribosomal protein uS19.

It is found in the cytoplasm. An accessory protein needed during the final step in the assembly of 30S ribosomal subunit, possibly for assembly of the head region. Essential for efficient processing of 16S rRNA. May be needed both before and after RbfA during the maturation of 16S rRNA. It has affinity for free ribosomal 30S subunits but not for 70S ribosomes. This is Ribosome maturation factor RimM from Chloroflexus aurantiacus (strain ATCC 29366 / DSM 635 / J-10-fl).